A 381-amino-acid polypeptide reads, in one-letter code: Cell division protein FtsZ (381 aa).

Positions 1-25 (MKFINDAIKESEKREKPSSSSMNSE) are disordered. Residues 7–17 (AIKESEKREKP) show a composition bias toward basic and acidic residues. Residues 48-52 (GAGNN), 135-137 (GTG), Glu166, Arg170, and Asp213 contribute to the GTP site.

The protein belongs to the FtsZ family. As to quaternary structure, homodimer. Polymerizes to form a dynamic ring structure in a strictly GTP-dependent manner. Interacts directly with several other division proteins.

Its subcellular location is the cytoplasm. Functionally, essential cell division protein that forms a contractile ring structure (Z ring) at the future cell division site. The regulation of the ring assembly controls the timing and the location of cell division. One of the functions of the FtsZ ring is to recruit other cell division proteins to the septum to produce a new cell wall between the dividing cells. Binds GTP and shows GTPase activity. This is Cell division protein FtsZ from Methanothermobacter thermautotrophicus (strain ATCC 29096 / DSM 1053 / JCM 10044 / NBRC 100330 / Delta H) (Methanobacterium thermoautotrophicum).